The sequence spans 365 residues: Carboxynorspermidine/carboxyspermidine decarboxylase (365 aa).

Lys37 is subject to N6-(pyridoxal phosphate)lysine. 2 residues coordinate substrate: Glu233 and Asp269.

It belongs to the Orn/Lys/Arg decarboxylase class-II family. NspC subfamily. As to quaternary structure, homodimer. The cofactor is pyridoxal 5'-phosphate.

The protein resides in the cytoplasm. The catalysed reaction is carboxynorspermidine + H(+) = norspermidine + CO2. The enzyme catalyses carboxyspermidine + H(+) = spermidine + CO2. Catalyzes the decarboxylation of carboxynorspermidine and carboxyspermidine. This Herminiimonas arsenicoxydans protein is Carboxynorspermidine/carboxyspermidine decarboxylase.